Here is a 351-residue protein sequence, read N- to C-terminus: Putative [LysW]-L-2-aminoadipate/[LysW]-L-glutamate phosphate reductase (351 aa).

NADP(+)-binding positions include 9–12 (SGFV) and 33–35 (SRR). Residue C150 is part of the active site. Residue N318 participates in NADP(+) binding.

This sequence belongs to the NAGSA dehydrogenase family. Type 1 subfamily. LysY sub-subfamily.

The protein localises to the cytoplasm. The enzyme catalyses [amino-group carrier protein]-C-terminal-N-(1-carboxy-5-oxopentan-1-yl)-L-glutamine + phosphate + NADP(+) = [amino-group carrier protein]-C-terminal-N-(1-carboxy-5-phosphooxy-5-oxopentan-1-yl)-L-glutamine + NADPH + H(+). The catalysed reaction is [amino-group carrier protein]-C-terminal-gamma-(L-glutamyl-5-semialdehyde)-L-glutamate + phosphate + NADP(+) = [amino-group carrier protein]-C-terminal-gamma-(5-phospho-L-glutamyl)-L-glutamate + NADPH + H(+). It participates in amino-acid biosynthesis; L-lysine biosynthesis via AAA pathway; L-lysine from L-alpha-aminoadipate (Thermus route): step 3/5. The protein operates within amino-acid biosynthesis; L-arginine biosynthesis. In terms of biological role, involved in both the arginine and lysine biosynthetic pathways. The chain is Putative [LysW]-L-2-aminoadipate/[LysW]-L-glutamate phosphate reductase from Pyrobaculum aerophilum (strain ATCC 51768 / DSM 7523 / JCM 9630 / CIP 104966 / NBRC 100827 / IM2).